A 413-amino-acid polypeptide reads, in one-letter code: Tyrosine--tRNA ligase (413 aa).

A 'HIGH' region motif is present at residues 55-64 (PTRPDLHLGH). A 'KMSKS' region motif is present at residues 242-246 (KMSKS). Lys245 contributes to the ATP binding site. The S4 RNA-binding domain occupies 346–410 (VKLSYILREC…GKKAFRRLVK (65 aa)).

Belongs to the class-I aminoacyl-tRNA synthetase family. TyrS type 2 subfamily. In terms of assembly, homodimer.

It is found in the cytoplasm. The enzyme catalyses tRNA(Tyr) + L-tyrosine + ATP = L-tyrosyl-tRNA(Tyr) + AMP + diphosphate + H(+). Its function is as follows. Catalyzes the attachment of tyrosine to tRNA(Tyr) in a two-step reaction: tyrosine is first activated by ATP to form Tyr-AMP and then transferred to the acceptor end of tRNA(Tyr). The chain is Tyrosine--tRNA ligase from Synechococcus sp. (strain JA-2-3B'a(2-13)) (Cyanobacteria bacterium Yellowstone B-Prime).